We begin with the raw amino-acid sequence, 145 residues long: Deoxyuridine 5'-triphosphate nucleotidohydrolase (145 aa).

Residues 65-67, Asn-78, and 82-84 contribute to the substrate site; these read RSG and TID.

Belongs to the dUTPase family. Mg(2+) serves as cofactor.

The enzyme catalyses dUTP + H2O = dUMP + diphosphate + H(+). It participates in pyrimidine metabolism; dUMP biosynthesis; dUMP from dCTP (dUTP route): step 2/2. This enzyme is involved in nucleotide metabolism: it produces dUMP, the immediate precursor of thymidine nucleotides and it decreases the intracellular concentration of dUTP so that uracil cannot be incorporated into DNA. This Clostridium tetani (strain Massachusetts / E88) protein is Deoxyuridine 5'-triphosphate nucleotidohydrolase.